The chain runs to 272 residues: Putative pyruvate, phosphate dikinase regulatory protein (272 aa).

An ADP-binding site is contributed by 151-158; the sequence is GISRTSKT.

It belongs to the pyruvate, phosphate/water dikinase regulatory protein family. PDRP subfamily.

The catalysed reaction is N(tele)-phospho-L-histidyl/L-threonyl-[pyruvate, phosphate dikinase] + ADP = N(tele)-phospho-L-histidyl/O-phospho-L-threonyl-[pyruvate, phosphate dikinase] + AMP + H(+). The enzyme catalyses N(tele)-phospho-L-histidyl/O-phospho-L-threonyl-[pyruvate, phosphate dikinase] + phosphate + H(+) = N(tele)-phospho-L-histidyl/L-threonyl-[pyruvate, phosphate dikinase] + diphosphate. Its function is as follows. Bifunctional serine/threonine kinase and phosphorylase involved in the regulation of the pyruvate, phosphate dikinase (PPDK) by catalyzing its phosphorylation/dephosphorylation. The polypeptide is Putative pyruvate, phosphate dikinase regulatory protein (Staphylococcus aureus (strain Mu3 / ATCC 700698)).